Reading from the N-terminus, the 180-residue chain is Large ribosomal subunit protein uL5 (180 aa).

The protein belongs to the universal ribosomal protein uL5 family. In terms of assembly, part of the 50S ribosomal subunit; part of the 5S rRNA/L5/L18/L25 subcomplex. Contacts the 5S rRNA and the P site tRNA. Forms a bridge to the 30S subunit in the 70S ribosome.

This is one of the proteins that bind and probably mediate the attachment of the 5S RNA into the large ribosomal subunit, where it forms part of the central protuberance. In the 70S ribosome it contacts protein S13 of the 30S subunit (bridge B1b), connecting the 2 subunits; this bridge is implicated in subunit movement. Contacts the P site tRNA; the 5S rRNA and some of its associated proteins might help stabilize positioning of ribosome-bound tRNAs. The protein is Large ribosomal subunit protein uL5 of Ligilactobacillus salivarius (strain UCC118) (Lactobacillus salivarius).